The primary structure comprises 842 residues: Oxysterol-binding protein-related protein 7 (842 aa).

The tract at residues 1–28 (MDFQERDPPFLPESAQSSKPSSAQQASE) is disordered. The segment covering 14-27 (SAQSSKPSSAQQAS) has biased composition (low complexity). The region spanning 47–142 (PERQEGHLLK…WVAQLRAHRL (96 aa)) is the PH domain. At Thr-171 the chain carries Phosphothreonine. A phosphoserine mark is found at Ser-217, Ser-226, Ser-256, and Ser-272. The disordered stretch occupies residues 330–369 (DMHQGSELSRMGVSEASTGQRRLHSLSTSSDTTADSFSSL). The segment covering 354 to 369 (SLSTSSDTTADSFSSL) has biased composition (low complexity).

This sequence belongs to the OSBP family. Expressed in epithelium of small and large intestines (at protein level). Expressed in stomach, duodenum, jejunum, ascending colon, spleen, thymus, lymph node, trachea and leukocytes.

The protein localises to the cytoplasm. It localises to the cytosol. It is found in the endoplasmic reticulum membrane. The protein resides in the cell membrane. This Homo sapiens (Human) protein is Oxysterol-binding protein-related protein 7 (OSBPL7).